Reading from the N-terminus, the 161-residue chain is MPSFDVVSEANMIEVKNAIEQSNKEISTRFDFKGSDARVEQKERELTLFADDDFKLGQVKDVLIGKLAKRNVDVRFLDYGKVEKIGGDKVKQIVTVKKGVTGDLAKKIVRLVKDSKIKVQASIQGDAVRVAGTKRDDLQSVIAMLRKDVTDTPLDFNNFRD.

The protein belongs to the YajQ family.

Its function is as follows. Nucleotide-binding protein. The protein is Nucleotide-binding protein Bcep1808_2648 of Burkholderia vietnamiensis (strain G4 / LMG 22486) (Burkholderia cepacia (strain R1808)).